The following is a 469-amino-acid chain: Putative arginine/ornithine antiporter (469 aa).

Helical transmembrane passes span 8 to 28 (GFWL…IFSL), 44 to 64 (AWLL…HLSI), 90 to 110 (AGFT…VAII), 144 to 164 (LTFA…VASI), 179 to 199 (VLGF…SLFG), 213 to 233 (IGIG…FVGI), 254 to 274 (ITGL…TMGV), 301 to 321 (VIMA…WILL), 347 to 367 (SPVI…FSVI), 375 to 395 (FTFL…VSAI), 417 to 437 (DGLI…TGTA), and 439 to 459 (LTTF…YPFV).

The protein belongs to the amino acid-polyamine-organocation (APC) superfamily. Basic amino acid/polyamine antiporter (APA) (TC 2.A.3.2) family.

It localises to the cell membrane. The catalysed reaction is L-ornithine(in) + L-arginine(out) = L-ornithine(out) + L-arginine(in). Functionally, catalyzes electroneutral exchange between L-arginine and L-ornithine. The protein is Putative arginine/ornithine antiporter (yvsH) of Bacillus subtilis (strain 168).